A 476-amino-acid polypeptide reads, in one-letter code: Nyctalopin (476 aa).

Residues 1 to 18 form the signal peptide; the sequence is MLVLLLHAVVLGLPSAWA. 11 LRR repeats span residues 60 to 84, 85 to 108, 110 to 133, 134 to 157, 159 to 181, 182 to 204, 205 to 228, 229 to 252, 254 to 276, 277 to 300, and 302 to 324; these read VSIDLDRNGLRFLGERAFGTLPSLR, RLSLRHNNLSFITPGAFKGLPRLA, LRLAHNGDLRYLHARTFAALSRLR, RLDLAACRLFSVPERLLAELPALR, LAAFDNLFRRVPGALRGLANLTH, AHLERGRIEAVASSSLQGLRRLR, SLSLQANRVRAVHAGAFGDCGVLE, HLLLNDNLLAELPADAFRGLRRLR, LNLGGNALDRVARAWFADLAELE, LLYLDRNSIAFVEEGAFQNLSGLL, and LHLNGNRLTVLAWVAFQPGFFLG. Asn92 carries an N-linked (GlcNAc...) asparagine glycan. Asn178 carries N-linked (GlcNAc...) asparagine glycosylation. Asn295 is a glycosylation site (N-linked (GlcNAc...) asparagine). Residues 336–387 enclose the LRRCT domain; that stretch reads DCRLEWLRDWMEGSGRVTDVPCASPGSVAGLDLSQVTFGRSSDGLCVDPEEL. Residues Asn388, Asn427, and Asn434 are each glycosylated (N-linked (GlcNAc...) asparagine).

This sequence belongs to the small leucine-rich proteoglycan (SLRP) family. SLRP class IV subfamily. In terms of tissue distribution, expressed in kidney and retina. Also at low levels in brain, testis and muscle. Within the retina, expressed in the inner segment of photoreceptors, outer and inner nuclear layers and the ganglion cell layer.

The protein resides in the secreted. The protein localises to the extracellular space. It localises to the extracellular matrix. The protein is Nyctalopin (NYX) of Homo sapiens (Human).